A 378-amino-acid chain; its full sequence is Cytochrome b (378 aa).

The next 4 membrane-spanning stretches (helical) occupy residues 33 to 53 (SGSL…FLSM), 77 to 98 (WLIR…YFHI), 113 to 133 (XNVG…GYVL), and 178 to 198 (FFAF…IHLI). Heme b-binding residues include His-83 and His-97. His-196 contacts heme b. An a ubiquinone-binding site is contributed by His-201. Helical transmembrane passes span 226 to 246 (FKDL…ALFS), 288 to 308 (LGGV…PILH), 320 to 340 (LTQF…WIGG), and 347 to 367 (FIII…VLFP).

This sequence belongs to the cytochrome b family. As to quaternary structure, the cytochrome bc1 complex contains 3 respiratory subunits (MT-CYB, CYC1 and UQCRFS1), 2 core proteins (UQCRC1 and UQCRC2) and probably 6 low-molecular weight proteins. Heme b serves as cofactor.

Its subcellular location is the mitochondrion inner membrane. In terms of biological role, component of the ubiquinol-cytochrome c reductase complex (complex III or cytochrome b-c1 complex) that is part of the mitochondrial respiratory chain. The b-c1 complex mediates electron transfer from ubiquinol to cytochrome c. Contributes to the generation of a proton gradient across the mitochondrial membrane that is then used for ATP synthesis. This Nannacara anomala (Goldeneye cichlid) protein is Cytochrome b (mt-cyb).